The following is a 524-amino-acid chain: Acetyl-CoA decarbonylase/synthase complex subunit beta (524 aa).

[Ni-Fe-S] cluster is bound by residues cysteine 212, cysteine 215, cysteine 301, and cysteine 303. The disordered stretch occupies residues 436–466 (WVEEEEEEAEEVAEEAAAEAAPAAQPAQAAQ). Positions 437 to 452 (VEEEEEEAEEVAEEAA) are enriched in acidic residues. Residues 453-466 (AEAAPAAQPAQAAQ) are compositionally biased toward low complexity.

Belongs to the CdhC family. In terms of assembly, monomer. The ACDS complex is made up of alpha, epsilon, beta, gamma and delta chains with a probable stoichiometry of (alpha(2)epsilon(2))(4)-beta(8)-(gamma(1)delta(1))(8). Requires [Ni-Fe-S] cluster as cofactor.

It catalyses the reaction Co(I)-[corrinoid Fe-S protein] + acetyl-CoA + H(+) = methyl-Co(III)-[corrinoid Fe-S protein] + CO + CoA. Its function is as follows. Part of a complex that catalyzes the reversible cleavage of acetyl-CoA, allowing autotrophic growth from CO(2). The alpha-epsilon complex generates CO from CO(2), while the beta subunit (this protein) combines the CO with CoA and a methyl group to form acetyl-CoA. The methyl group, which is incorporated into acetyl-CoA, is transferred to the beta subunit by a corrinoid iron-sulfur protein (the gamma-delta complex). This is Acetyl-CoA decarbonylase/synthase complex subunit beta from Archaeoglobus fulgidus (strain ATCC 49558 / DSM 4304 / JCM 9628 / NBRC 100126 / VC-16).